The following is a 64-amino-acid chain: Protein DsrB (64 aa).

The protein belongs to the DsrB family.

This chain is Protein DsrB, found in Salmonella arizonae (strain ATCC BAA-731 / CDC346-86 / RSK2980).